The primary structure comprises 335 residues: Leukocyte cell-derived chemotaxin-2 homolog (335 aa).

Positions methionine 1 to threonine 20 are cleaved as a signal peptide. Cystine bridges form between cysteine 28–cysteine 66 and cysteine 39–cysteine 46. Position 63 (aspartate 63) interacts with Zn(2+). Asparagine 317 carries N-linked (GlcNAc...) asparagine glycosylation.

It belongs to the LECT2/MIM-1 family. Component of a multi-protein dma-1 receptor-ligand complex, which is activated upon binding of lect-2, mnr-1 and sax-7 ligands to promote the morphogenesis of dendrites which extend from the PVD neuronal body. Within the complex interacts with sax-7; the interaction is required for lect-2 dendritic localization and enhances the binding of the mnr-1 and sax-7 ligands to the dma-1 receptor-ligand complex. In terms of tissue distribution, expressed in body wall muscle cells, along the boundary of the lateral hypodermis, seam cells, processes of the nervous system including commissures, sensory dendrites in the head, and lateral nerve tracts, and motor neurons and some mechanosensory neurons such as ALM.

The protein localises to the secreted. The protein resides in the cell junction. It localises to the extracellular space. It is found in the extracellular matrix. Its subcellular location is the basement membrane. The protein localises to the cell projection. The protein resides in the dendrite. It localises to the perikaryon. It is found in the cell surface. Functionally, muscle-derived dendritic guidance cue, which is required for the formation of somatosensory dendritic arbors which extend from PVD and FLP sensory neurons during development. Ligand of a multi-protein dma-1 receptor-ligand complex, which is activated upon binding of lect-2, mnr-1 and sax-7 ligands to control the growth of dendrites that extend anteriorly from the PVD neuronal cell body. Enhances the binding of the mnr-1 and sax-7 ligands to the dma-1 receptor-ligand complex. Restricts the growth of secondary PVD dendritic branches and any irregularly positioned ectopic tertiary dendritic branches that originate from secondary branches, and promotes the formation of stable higher order dendritic branches. In particular, it is required for the formation of quaternary PVD dendritic branches and promotes their innervation of body wall muscles. Promotes self-avoidance of tertiary dendritic branches of PVD sensory neurons. Not required for the growth of dendrites that extend from AIY and PVQ interneurons, DVB GABergic neurons, PLM and ALM mechanosensory neurons, AFD sensory neurons and DD/VD and DA/DB motor neurons. In Caenorhabditis elegans, this protein is Leukocyte cell-derived chemotaxin-2 homolog.